Consider the following 193-residue polypeptide: uncharacterized protein (193 aa).

This is an uncharacterized protein from Saccharomyces cerevisiae (strain ATCC 204508 / S288c) (Baker's yeast).